We begin with the raw amino-acid sequence, 294 residues long: Small ribosomal subunit biogenesis GTPase RsgA 2, mitochondrial (294 aa).

The transit peptide at 1-68 directs the protein to the mitochondrion; the sequence is MQTFSSAAAL…RSFLAPVLPL (68 aa). The region spanning 155-294 is the CP-type G domain; that stretch reads VSEVLDPPVA…VSFFLSYFIL (140 aa). 255-263 contacts GTP; that stretch reads GPSGVGKSS.

Belongs to the TRAFAC class YlqF/YawG GTPase family.

The protein localises to the mitochondrion. The protein is Small ribosomal subunit biogenesis GTPase RsgA 2, mitochondrial of Arabidopsis thaliana (Mouse-ear cress).